Here is a 1029-residue protein sequence, read N- to C-terminus: Tyrosine-protein kinase-like otk (1029 aa).

A signal peptide spans 1 to 18 (MISIYGLVMALMMASVLA). Topologically, residues 19–577 (SSSRFQRVPQ…GGDGFLVTRA (559 aa)) are extracellular. 5 Ig-like C2-type domains span residues 21–110 (SRFQ…AKLS), 109–195 (LSVI…RVMS), 247–361 (PEDL…APIS), 364–459 (PGIL…VAIN), and 464–554 (PKFS…VQLV). The N-linked (GlcNAc...) asparagine glycan is linked to N35. Intrachain disulfides connect C42/C91, C133/C184, C272/C350, and C395/C443. 7 N-linked (GlcNAc...) asparagine glycosylation sites follow: N332, N413, N425, N440, N453, N508, and N520. An intrachain disulfide couples C486 to C538. A helical transmembrane segment spans residues 578–598 (VLITMTVALAYIVLVVGLMLW). The Cytoplasmic portion of the chain corresponds to 599–1029 (CRYRRQARKA…LSKAMQSAEK (431 aa)). 2 disordered regions span residues 613-675 (LSTK…KKSA) and 714-756 (SPSD…KTSM). Residues 651–669 (KSSGDAQKSDDTACSQQSR) show a composition bias toward polar residues. S674 carries the post-translational modification Phosphoserine. A Protein kinase; inactive domain is found at 688 to 1024 (LSELIQIGRG…QLGAALSKAM (337 aa)). A compositionally biased stretch (basic and acidic residues) spans 716–727 (SDKDADTEKQHS).

This sequence belongs to the protein kinase superfamily. Tyr protein kinase family. Insulin receptor subfamily. Interacts with plexA; component of a receptor complex that mediates the repulsive signaling in response to Semaphorin ligands.

It is found in the cell membrane. In terms of biological role, acts as a calcium-dependent, homophilic cell adhesion molecule that regulates neural recognition during the development of the nervous system. Component of the repulsive Plexin signaling response to regulate motor axon guidance at the embryonic stage. Also component of a receptor complex that is required in the adult visual system to innervate the lamina layer; specific targeting of R1-R6 axons. This chain is Tyrosine-protein kinase-like otk, found in Drosophila simulans (Fruit fly).